The following is a 125-amino-acid chain: RxLR effector protein Avh6 (125 aa).

The N-terminal stretch at 1–25 (MRLSSTTFVVLAAVLLASGTAVSKA) is a signal peptide. Positions 48-70 (RFLRSHHTEDGKAKLSNYDNEER) match the RxLR-dEER motif.

It belongs to the RxLR effector family.

The protein resides in the secreted. It localises to the host cell. Its function is as follows. Effector that suppresses plant defense responses during the early stages of pathogen infection. Suppresses cell death induced by effectors and PAMPs in plant hosts. Triggers a hypersensitive response (HR) in the presence of Rps1d. Suppresses BAX-induced cell death and enhanced P.capsici infection in Nicotiana benthamiana. Also suppresses effector-triggered immunity induction by associating with Avr1b and Rps1b, suggesting a role in suppressing plant immunity. The sequence is that of RxLR effector protein Avh6 from Phytophthora sojae (Soybean stem and root rot agent).